A 568-amino-acid polypeptide reads, in one-letter code: Glycine--tRNA ligase (568 aa).

The substrate site is built by R97 and E163. Residues R195 to E197, I205 to F210, E322 to C323, and G441 to R444 contribute to the ATP site. F210 to E214 contributes to the substrate binding site. E437–G441 is a substrate binding site.

This sequence belongs to the class-II aminoacyl-tRNA synthetase family.

It is found in the cytoplasm. It catalyses the reaction tRNA(Gly) + glycine + ATP = glycyl-tRNA(Gly) + AMP + diphosphate. In terms of biological role, catalyzes the attachment of glycine to tRNA(Gly). This chain is Glycine--tRNA ligase, found in Pyrococcus furiosus (strain ATCC 43587 / DSM 3638 / JCM 8422 / Vc1).